Consider the following 342-residue polypeptide: Holliday junction branch migration complex subunit RuvB (342 aa).

Residues 1–185 (MRKDYLNSNK…FGINTRLAYY (185 aa)) are large ATPase domain (RuvB-L). ATP contacts are provided by residues Leu24, Arg25, Gly66, Lys69, Thr70, Thr71, 132–134 (EDF), Arg175, Tyr185, and Arg222. Thr70 serves as a coordination point for Mg(2+). Residues 186–256 (DVTLLTQIVK…IAQMALKALD (71 aa)) form a small ATPAse domain (RuvB-S) region. The interval 259-342 (EDGLDEMDNR…PPQRAGTLFE (84 aa)) is head domain (RuvB-H). DNA-binding residues include Arg314 and Arg319.

It belongs to the RuvB family. Homohexamer. Forms an RuvA(8)-RuvB(12)-Holliday junction (HJ) complex. HJ DNA is sandwiched between 2 RuvA tetramers; dsDNA enters through RuvA and exits via RuvB. An RuvB hexamer assembles on each DNA strand where it exits the tetramer. Each RuvB hexamer is contacted by two RuvA subunits (via domain III) on 2 adjacent RuvB subunits; this complex drives branch migration. In the full resolvosome a probable DNA-RuvA(4)-RuvB(12)-RuvC(2) complex forms which resolves the HJ.

The protein resides in the cytoplasm. The enzyme catalyses ATP + H2O = ADP + phosphate + H(+). In terms of biological role, the RuvA-RuvB-RuvC complex processes Holliday junction (HJ) DNA during genetic recombination and DNA repair, while the RuvA-RuvB complex plays an important role in the rescue of blocked DNA replication forks via replication fork reversal (RFR). RuvA specifically binds to HJ cruciform DNA, conferring on it an open structure. The RuvB hexamer acts as an ATP-dependent pump, pulling dsDNA into and through the RuvAB complex. RuvB forms 2 homohexamers on either side of HJ DNA bound by 1 or 2 RuvA tetramers; 4 subunits per hexamer contact DNA at a time. Coordinated motions by a converter formed by DNA-disengaged RuvB subunits stimulates ATP hydrolysis and nucleotide exchange. Immobilization of the converter enables RuvB to convert the ATP-contained energy into a lever motion, pulling 2 nucleotides of DNA out of the RuvA tetramer per ATP hydrolyzed, thus driving DNA branch migration. The RuvB motors rotate together with the DNA substrate, which together with the progressing nucleotide cycle form the mechanistic basis for DNA recombination by continuous HJ branch migration. Branch migration allows RuvC to scan DNA until it finds its consensus sequence, where it cleaves and resolves cruciform DNA. This Amoebophilus asiaticus (strain 5a2) protein is Holliday junction branch migration complex subunit RuvB.